The sequence spans 213 residues: MLLQKEREEIVAYGKKMISSGLTKGTGGNISIFNREQGLVAISPSGLEYYETKPEDVVILNLDGEVIEGERKPSSELDMHLIYYRKREDINALVHTHSPYAKTIASLGWELPAVSYLIAFAGPNVRCAPYETFGTKQLADAAFEGMIDRRAVLLANHGLIAGANNIKMAFTVAEEIEFCAQIYYQTKSIGEPKLLPEDEMENLAKKFEGYGQQ.

Residues 28–29 (GN), 45–46 (SG), and 74–76 (SSE) each bind substrate. Residue Glu-76 is the Proton donor/acceptor of the active site. Residues Glu-76, His-95, His-97, and His-157 each coordinate Mn(2+).

The protein belongs to the aldolase class II family. As to quaternary structure, forms homooligomers, possibly homotetramers. Mn(2+) serves as cofactor.

The catalysed reaction is 5-deoxy-D-ribulose 1-phosphate = dihydroxyacetone phosphate + acetaldehyde. It participates in carbohydrate degradation. Functionally, catalyzes the cleavage of 5-deoxy-D-ribulose 1-phosphate to yield dihydroxyacetone phosphate (DHAP) and acetaldehyde, as part of a 5-deoxyribose salvage pathway that recycles this toxic radical SAM enzyme by-product to mainstream metabolites. Is also able to catalyze the reverse reaction, using several aldehydes as substrate, with acetaldehyde being the preferred substrate. The chain is 5-deoxy-D-ribulose 1-phosphate aldolase from Bacillus thuringiensis serovar kurstaki (strain ATCC 35866 / NRRL B-4488 / HD73).